The chain runs to 374 residues: Anthranilate O-methyltransferase 2 (374 aa).

Tyr-18 is an S-adenosyl-L-homocysteine binding site. Residue Gln-25 participates in anthranilate binding. 6 residues coordinate S-adenosyl-L-homocysteine: Cys-59, Asn-64, Asp-98, Leu-99, Ser-142, and Tyr-143. Trp-164 contributes to the anthranilate binding site. Residues Glu-261 and Phe-263 each coordinate Mg(2+).

Belongs to the methyltransferase superfamily. Type-7 methyltransferase family. SABATH subfamily.

The catalysed reaction is anthranilate + S-adenosyl-L-methionine = O-methyl anthranilate + S-adenosyl-L-homocysteine. Functionally, methyltransferase involved in the biosynthesis of methyl anthranilate in response to stresses. Utilizes anthranilic acid as substrate. Produces exclusively the O-methyl ester. The sequence is that of Anthranilate O-methyltransferase 2 (AAMT2) from Zea mays (Maize).